The sequence spans 452 residues: uncharacterized protein (452 aa).

This sequence belongs to the HypE family.

This is an uncharacterized protein from Methanocaldococcus jannaschii (strain ATCC 43067 / DSM 2661 / JAL-1 / JCM 10045 / NBRC 100440) (Methanococcus jannaschii).